We begin with the raw amino-acid sequence, 140 residues long: Nucleoside diphosphate kinase (140 aa).

ATP contacts are provided by Lys-11, Phe-59, Arg-87, Thr-93, Arg-104, and Asn-114. His-117 acts as the Pros-phosphohistidine intermediate in catalysis.

The protein belongs to the NDK family. As to quaternary structure, homotetramer. It depends on Mg(2+) as a cofactor.

The protein localises to the cytoplasm. It carries out the reaction a 2'-deoxyribonucleoside 5'-diphosphate + ATP = a 2'-deoxyribonucleoside 5'-triphosphate + ADP. The catalysed reaction is a ribonucleoside 5'-diphosphate + ATP = a ribonucleoside 5'-triphosphate + ADP. Major role in the synthesis of nucleoside triphosphates other than ATP. The ATP gamma phosphate is transferred to the NDP beta phosphate via a ping-pong mechanism, using a phosphorylated active-site intermediate. The sequence is that of Nucleoside diphosphate kinase from Methylobacterium sp. (strain 4-46).